The primary structure comprises 392 residues: L-rhamnonate dehydratase (392 aa).

Positions 22 and 48 each coordinate substrate. Residues aspartate 214, glutamate 240, and glutamate 268 each coordinate Mg(2+). Histidine 318 acts as the Proton acceptor in catalysis. Glutamate 338 provides a ligand contact to substrate.

It belongs to the mandelate racemase/muconate lactonizing enzyme family. RhamD subfamily. Homooctamer; tetramer of dimers. Mg(2+) is required as a cofactor.

The catalysed reaction is L-rhamnonate = 2-dehydro-3-deoxy-L-rhamnonate + H2O. Its function is as follows. Catalyzes the dehydration of L-rhamnonate to 2-keto-3-deoxy-L-rhamnonate (KDR). The chain is L-rhamnonate dehydratase from Burkholderia cenocepacia (strain HI2424).